The chain runs to 120 residues: NAD(P)H-quinone oxidoreductase subunit 3, chloroplastic (120 aa).

Transmembrane regions (helical) follow at residues 9–29 (IFWA…FISG), 64–84 (MFAL…PWAM), and 88–108 (VLGV…IVGS).

Belongs to the complex I subunit 3 family. In terms of assembly, NDH is composed of at least 16 different subunits, 5 of which are encoded in the nucleus.

It is found in the plastid. The protein resides in the chloroplast thylakoid membrane. The catalysed reaction is a plastoquinone + NADH + (n+1) H(+)(in) = a plastoquinol + NAD(+) + n H(+)(out). The enzyme catalyses a plastoquinone + NADPH + (n+1) H(+)(in) = a plastoquinol + NADP(+) + n H(+)(out). In terms of biological role, NDH shuttles electrons from NAD(P)H:plastoquinone, via FMN and iron-sulfur (Fe-S) centers, to quinones in the photosynthetic chain and possibly in a chloroplast respiratory chain. The immediate electron acceptor for the enzyme in this species is believed to be plastoquinone. Couples the redox reaction to proton translocation, and thus conserves the redox energy in a proton gradient. This Vitis vinifera (Grape) protein is NAD(P)H-quinone oxidoreductase subunit 3, chloroplastic.